A 166-amino-acid chain; its full sequence is MTTDTASNGNGAQQAPSLNILAQYVKDLSFENPGAPRSLQARDQAPSININVNVNANPLAENDFDVVLSLNAQAQDGDKVLFNVELAYGGVFRVSGFPQEHMLPLLFIECPRLLFPFARQIVADATRNGGFPPLMIDPIDFAQMFAQRMAEEKVRAQVANSNTTTN.

Belongs to the SecB family. As to quaternary structure, homotetramer, a dimer of dimers. One homotetramer interacts with 1 SecA dimer.

Its subcellular location is the cytoplasm. Functionally, one of the proteins required for the normal export of preproteins out of the cell cytoplasm. It is a molecular chaperone that binds to a subset of precursor proteins, maintaining them in a translocation-competent state. It also specifically binds to its receptor SecA. This is Protein-export protein SecB from Sinorhizobium fredii (strain NBRC 101917 / NGR234).